A 333-amino-acid chain; its full sequence is Protein FAM170A (333 aa).

Disordered regions lie at residues 1–45, 73–107, and 143–214; these read MKRR…GVGE, LQDS…PSYK, and ETSE…AKTP. The span at 10–29 shows a compositional bias: basic and acidic residues; sequence LEIEESKEAGISKSQEDISH. Low complexity predominate over residues 92 to 105; that stretch reads TTAPSQQASSSCPS. Basic and acidic residues predominate over residues 143–156; the sequence is ETSESLEKQPRMEE. Positions 170–179 are enriched in polar residues; the sequence is SDVSTRNLLS. A compositionally biased stretch (basic and acidic residues) spans 185–196; that stretch reads GEEKEHEEKPES. At Thr213 the chain carries Phosphothreonine. A C2H2-type; degenerate zinc finger spans residues 224–248; it reads FRCMACCRVFATMESLQEHVQYGIR. Positions 267 to 333 are disordered; it reads MESESTQEEE…RKDHCDNSGS (67 aa). The span at 271-281 shows a compositional bias: acidic residues; the sequence is STQEEEEDHTE. The span at 282–293 shows a compositional bias: basic and acidic residues; that stretch reads ETEKPKEEKAEE. Ser308 carries the phosphoserine modification.

It belongs to the FAM170 family. Testis-specific.

Its subcellular location is the nucleus. Functionally, acts as a nuclear transcription factor that positively regulates the expression of heat shock genes. Binds to heat shock promoter elements (HSE). The protein is Protein FAM170A (Fam170a) of Mus musculus (Mouse).